A 658-amino-acid chain; its full sequence is ATP-dependent RNA helicase DDX3Y (658 aa).

The segment at 1-143 (MSQVAAESTA…DWSKPLPPSE (143 aa)) is disordered. Position 2 is an N-acetylserine (serine 2). A compositionally biased stretch (basic and acidic residues) spans 45–69 (RNRETSKGVCDKDSSGWSCSKDKDA). Lysine 56 is subject to N6-acetyllysine. Phosphoserine is present on residues serine 86 and serine 90. Positions 94-129 (GRFDDHGRNDYDGIGGRDRTGFGKFERSGHSRWSDR) are enriched in basic and acidic residues. Arginine 101 is subject to Omega-N-methylarginine. Residue tyrosine 104 is modified to Phosphotyrosine. Arginine 110 is subject to Omega-N-methylarginine. An N6-acetyllysine modification is found at lysine 117. Serine 130 and serine 182 each carry phosphoserine. Positions 179–207 (ENFSDIEMGEIIMGNIELTRYTRPTPVQK) match the Q motif motif. Residue 199-206 (YTRPTPVQ) coordinates ATP. The Helicase ATP-binding domain maps to 210-402 (IPIIKEKRDL…RDFLDEYIFL (193 aa)). Residue lysine 214 forms a Glycyl lysine isopeptide (Lys-Gly) (interchain with G-Cter in SUMO2) linkage. 223–230 (AQTGSGKT) contributes to the ATP binding site. A DEAD box motif is present at residues 346 to 349 (DEAD). Residues 413 to 574 (NITQKVVWVE…EVPSWLESMA (162 aa)) enclose the Helicase C-terminal domain. Position 455 is a phosphoserine (serine 455). Arginine 590 is subject to Omega-N-methylarginine. 2 positions are modified to phosphoserine: serine 592 and serine 603. The disordered stretch occupies residues 597–627 (ARDYRQSSGSANAGFNSNRANSSRSSGSSHN). The span at 603–627 (SSGSANAGFNSNRANSSRSSGSSHN) shows a compositional bias: low complexity. Omega-N-methylarginine occurs at positions 615 and 628.

It belongs to the DEAD box helicase family. DDX3/DED1 subfamily. In terms of tissue distribution, found in heart, brain, liver, skeletal muscle, kidney and testis. Low expression detected in lung. In testis, expressed in all types of spermatogenic cells including spermatogonia, spermatocytes, spermatids and somatic Sertoli cells within the seminiferous tubules. Also expressed in Leydig cells and other interstitial cells.

The protein localises to the cytoplasm. It localises to the nucleus. The catalysed reaction is ATP + H2O = ADP + phosphate + H(+). Functionally, probable ATP-dependent RNA helicase. During immune response, may enhance IFNB1 expression via IRF3/IRF7 pathway. The sequence is that of ATP-dependent RNA helicase DDX3Y (Ddx3y) from Mus musculus (Mouse).